A 223-amino-acid polypeptide reads, in one-letter code: MSDICDANKLKHRFRGYFPVVIDVETAGFNSQTDALLEIAVTLLKMDDEGMLGIDKTLHFHIEPFEGANLEPAALAFNGIDPNNPLRGAVSEKEAFLDIFKAVKKAQKAADCHRCIIVAHNAAFDHGFVSKAIERCDLKRSPFHPFATFDTATLAGLAIGHTVLAKACMMAGIPFDNKEAHSALYDTERTAELFCYIVNRWKQLGGWPLLAAGAQDAESDTEE.

In terms of domain architecture, Exonuclease spans 20-194 (VVIDVETAGF…YDTERTAELF (175 aa)). Mg(2+) is bound by residues aspartate 23, glutamate 25, histidine 181, and aspartate 186. Histidine 181 (proton donor/acceptor) is an active-site residue.

The protein belongs to the RNase T family. Homodimer. Mg(2+) is required as a cofactor.

Its function is as follows. Trims short 3' overhangs of a variety of RNA species, leaving a one or two nucleotide 3' overhang. Responsible for the end-turnover of tRNA: specifically removes the terminal AMP residue from uncharged tRNA (tRNA-C-C-A). Also appears to be involved in tRNA biosynthesis. The sequence is that of Ribonuclease T from Shewanella sp. (strain W3-18-1).